We begin with the raw amino-acid sequence, 265 residues long: Transcription factor Spi-B-like (265 aa).

A TAD1 (Acidic) region spans residues 1–31 (MLTLEASQLDGPHPSYMFSDSSFYDLDSCKP). The interval 42–63 (AEPPTDPCAGWLELAEPGYEPF) is TAD2. Residues 127 to 160 (TPLSEDDDFPTDAPALEVSDSDSDENLSPGGSLD) form a disordered region. The segment at residues 169–252 (LRLYQFLLGL…VKKKLTYQFG (84 aa)) is a DNA-binding region (ETS).

Belongs to the ETS family.

The protein localises to the nucleus. Its function is as follows. May act as a sequence specific transcriptional activator. This is Transcription factor Spi-B-like from Paleosuchus palpebrosus (Cuvier's smooth-fronted caiman).